Here is a 122-residue protein sequence, read N- to C-terminus: MISGIRVNDNCVTEFNNMKIRKTCGWIIFVIQNCEIIIHSKGASTTLTELVQSIDKNNEIQCAYVVFDAVSKIHFFMYARESSNSRDRMTYASSKQAILKKIEGVNVLTSVIESAQDVADLK.

In terms of domain architecture, ADF-H spans 4 to 122 (GIRVNDNCVT…ESAQDVADLK (119 aa)).

The protein belongs to the actin-binding proteins ADF family. In terms of assembly, interacts with monomeric actin, does not bind to actin polymers.

Its subcellular location is the cytoplasm. It is found in the cytoskeleton. Its function is as follows. Not involved in actin polymerisation, instead functions to stimulate nucleotide exchange on monomeric actin and influence turnover of the small amount of cytosolic actin microfilaments. Essential for erythrocytic schizogony. The protein is Cofilin/actin-depolymerizing factor homolog 1 of Plasmodium falciparum (isolate 3D7).